Consider the following 1015-residue polypeptide: Putative helicase mov-10-B.2 (1015 aa).

Positions 94-130 (QWFRPRRRQQNQANATPGNVSSVTPSSDQGPSCPESG) are disordered. A compositionally biased stretch (polar residues) spans 109 to 123 (TPGNVSSVTPSSDQG). Residue 555–562 (GPPGTGKT) coordinates ATP. Positions 677–680 (DEAG) match the DEAG box motif.

This sequence belongs to the DNA2/NAM7 helicase family. SDE3 subfamily.

The protein resides in the cytoplasm. It localises to the P-body. It catalyses the reaction ATP + H2O = ADP + phosphate + H(+). Functionally, probable RNA helicase. Required for RNA-mediated gene silencing by the RNA-induced silencing complex (RISC). Required for both miRNA-mediated translational repression and miRNA-mediated cleavage of complementary mRNAs by RISC. The protein is Putative helicase mov-10-B.2 (mov10b.2) of Danio rerio (Zebrafish).